We begin with the raw amino-acid sequence, 853 residues long: A-kinase anchor protein 3 (853 aa).

The tract at residues 124–137 is PKA-RII subunit binding domain; sequence VSFYANRLTNLVIA. The disordered stretch occupies residues 188–240; sequence RNAAPDKAPGSGDRVSGSSQSPPNLKYKSTLKIKESTKERQGPDDKPPSKKSF. Ser205 and Ser208 each carry phosphoserine. Positions 219 to 235 are enriched in basic and acidic residues; the sequence is KIKESTKERQGPDDKPP. Ser403 carries the post-translational modification Phosphoserine. A Phosphotyrosine modification is found at Tyr404. Phosphoserine occurs at positions 635 and 636.

It belongs to the AKAP110 family. Interacts with ROPN1 and ROPN1L. Interacts with QRICH2. In terms of processing, phosphorylated by STK33 during sperm flagella assembly. Phosphorylated on tyrosine residues. As to expression, testis specific; only expressed in spermatids.

It localises to the cytoplasmic vesicle. It is found in the secretory vesicle. The protein resides in the acrosome. Its subcellular location is the cell projection. The protein localises to the cilium. It localises to the flagellum. Structural component of sperm fibrous sheath. Required for the formation of the subcellular structure of the sperm flagellum, sperm motility and male fertility. The protein is A-kinase anchor protein 3 of Homo sapiens (Human).